The primary structure comprises 469 residues: Probable lysophospholipase BODYGUARD 1 (469 aa).

Residues 1-45 (MGFSRSLNRTVGVFVFFILDIVDFLLCFTYKTLDFFFESEWKPCY) form the signal peptide. Cys-46 carries N-palmitoyl cysteine lipidation. The AB hydrolase-1 domain maps to 185–439 (VVFIHGFLSS…IHVVPDKDHI (255 aa)). The active site involves His-189. Ser-263 acts as the Nucleophile in catalysis. Residues Asp-410 and His-438 each act as charge relay system in the active site.

In terms of tissue distribution, expressed exclusively in protodermal and epidermal cells of all organs, especially on adaxial sides.

It is found in the cell membrane. It localises to the secreted. Its subcellular location is the cell wall. Functionally, controls cuticle development and morphogenesis, by promoting cutin and suberin monomers loading. Involved in the regulation of abscissic acid (ABA) biosynthesis in response to osmotic stress. Plays an important role in osmotic stress and drought resistance. Required to ensure a reduced permeability of aerial tissue, thus preventing transpiration. Regulates lateral root hair development. Required for infection by the pathogenic necrotrophic fungus Botrytis cinerea, probably by regulating structural traits of the cuticle. This Arabidopsis thaliana (Mouse-ear cress) protein is Probable lysophospholipase BODYGUARD 1.